A 274-amino-acid chain; its full sequence is Membrane protein insertase YidC 2 (274 aa).

Residues 1-20 (MKKKLKLTSLLGLSLLIMTA) form the signal peptide. A lipid anchor (N-palmitoyl cysteine) is attached at cysteine 21. Residue cysteine 21 is the site of S-diacylglycerol cysteine attachment. 4 helical membrane passes run 56–76 (ISIG…LLPV), 128–148 (SDSL…FQAL), 167–187 (VDTT…STWL), and 205–225 (GIPV…ALYW).

Belongs to the OXA1/ALB3/YidC family. Type 2 subfamily.

The protein resides in the cell membrane. Its function is as follows. Required for the insertion and/or proper folding and/or complex formation of integral membrane proteins into the membrane. Involved in integration of membrane proteins that insert both dependently and independently of the Sec translocase complex, as well as at least some lipoproteins. The protein is Membrane protein insertase YidC 2 of Streptococcus pneumoniae serotype 4 (strain ATCC BAA-334 / TIGR4).